The primary structure comprises 285 residues: MDKIKVGLQYWIPQHGLTRLVGKLASAKAGSLTTAVIRWFIKQYNVNMDEAKHSDPKHFKTFNEFFVRELKEGARPITEGDEIITHPADACVSQFGPIEDGQLIQAKGHNYSAQELLGGDEKLAEEFKDGSFATLYLSPRDYHRVHMPCDGTLRQMIYVPGDLFSVNPLTAENVPNLFARNERVVCIFDTEFGPMAQVLVGATIVGSIEQVWAGTITPPRGNTVYKWDYPAEGDKAVILKKGEEMGRFKLGSTVINLFAKDAIEFDVSMENGQPTVMGTPYALKK.

Residues Asp89, His146, and Ser252 each act as charge relay system; for autoendoproteolytic cleavage activity in the active site. Ser252 functions as the Schiff-base intermediate with substrate; via pyruvic acid; for decarboxylase activity in the catalytic mechanism. Ser252 is subject to Pyruvic acid (Ser); by autocatalysis.

This sequence belongs to the phosphatidylserine decarboxylase family. PSD-B subfamily. Prokaryotic type I sub-subfamily. In terms of assembly, heterodimer of a large membrane-associated beta subunit and a small pyruvoyl-containing alpha subunit. It depends on pyruvate as a cofactor. In terms of processing, is synthesized initially as an inactive proenzyme. Formation of the active enzyme involves a self-maturation process in which the active site pyruvoyl group is generated from an internal serine residue via an autocatalytic post-translational modification. Two non-identical subunits are generated from the proenzyme in this reaction, and the pyruvate is formed at the N-terminus of the alpha chain, which is derived from the carboxyl end of the proenzyme. The autoendoproteolytic cleavage occurs by a canonical serine protease mechanism, in which the side chain hydroxyl group of the serine supplies its oxygen atom to form the C-terminus of the beta chain, while the remainder of the serine residue undergoes an oxidative deamination to produce ammonia and the pyruvoyl prosthetic group on the alpha chain. During this reaction, the Ser that is part of the protease active site of the proenzyme becomes the pyruvoyl prosthetic group, which constitutes an essential element of the active site of the mature decarboxylase.

The protein resides in the cell membrane. It carries out the reaction a 1,2-diacyl-sn-glycero-3-phospho-L-serine + H(+) = a 1,2-diacyl-sn-glycero-3-phosphoethanolamine + CO2. It participates in phospholipid metabolism; phosphatidylethanolamine biosynthesis; phosphatidylethanolamine from CDP-diacylglycerol: step 2/2. Functionally, catalyzes the formation of phosphatidylethanolamine (PtdEtn) from phosphatidylserine (PtdSer). The polypeptide is Phosphatidylserine decarboxylase proenzyme (Vibrio parahaemolyticus serotype O3:K6 (strain RIMD 2210633)).